Here is a 137-residue protein sequence, read N- to C-terminus: Methylglyoxal synthase (137 aa).

Positions 1–137 constitute an MGS-like domain; that stretch reads MNIALVAHDK…KLSHNDEPPA (137 aa). Residues histidine 8, lysine 12, 34 to 37, and 54 to 55 contribute to the substrate site; these read TGTT and SG. The active-site Proton donor/acceptor is the aspartate 60. Histidine 87 lines the substrate pocket.

Belongs to the methylglyoxal synthase family.

It carries out the reaction dihydroxyacetone phosphate = methylglyoxal + phosphate. In terms of biological role, catalyzes the formation of methylglyoxal from dihydroxyacetone phosphate. This chain is Methylglyoxal synthase, found in Exiguobacterium sp. (strain ATCC BAA-1283 / AT1b).